The following is a 90-amino-acid chain: MVSSGYLQAVMLLLAVQLLCFRPSDAEQEAGTVIPAESRPCVDCHAFEFMQRALQDLKKTAFNLDARTETLVLRAERRALCDCMPTNTLR.

The first 26 residues, 1–26 (MVSSGYLQAVMLLLAVQLLCFRPSDA), serve as a signal peptide directing secretion.

The protein belongs to the NICOL family.

It is found in the secreted. Functionally, mRNA-binding protein which interacts with a range of target mRNAs and may promote extracellular matrix production. This Salmo salar (Atlantic salmon) protein is NELL2-interacting cell ontogeny regulator 1.